The primary structure comprises 400 residues: 3-hydroxykynurenine transaminase (400 aa).

The binds to and confers specificity for 3-hydroxykynurenine; shared with dimeric partner stretch occupies residues 43–44 (SN). Pyridoxal 5'-phosphate contacts are provided by residues 77–79 (SAH), Ser154, and Gln204. Residue Ser154 coordinates substrate. At Lys205 the chain carries N6-(pyridoxal phosphate)lysine. Pyridoxal 5'-phosphate is bound by residues Tyr256 and Thr259. Position 356 (Arg356) interacts with substrate.

It belongs to the class-V pyridoxal-phosphate-dependent aminotransferase family. In terms of assembly, homodimer. May form homotetramer. Requires pyridoxal 5'-phosphate as cofactor.

Its subcellular location is the peroxisome. It catalyses the reaction glyoxylate + L-alanine = glycine + pyruvate. The enzyme catalyses L-kynurenine + glyoxylate = kynurenate + glycine + H2O. The catalysed reaction is 3-hydroxy-L-kynurenine + glyoxylate = xanthurenate + glycine + H2O. It carries out the reaction 3-hydroxy-L-kynurenine + pyruvate = xanthurenate + L-alanine + H2O. It catalyses the reaction L-kynurenine + pyruvate = kynurenate + L-alanine + H2O. The enzyme catalyses 2-oxobutanoate + L-alanine = (2S)-2-aminobutanoate + pyruvate. The catalysed reaction is L-phenylalanine + pyruvate = 3-phenylpyruvate + L-alanine. It carries out the reaction L-serine + pyruvate = 3-hydroxypyruvate + L-alanine. It catalyses the reaction L-cysteine + pyruvate = 2-oxo-3-sulfanylpropanoate + L-alanine. The enzyme catalyses 3-hydroxy-L-kynurenine + oxaloacetate = 4-(2-amino-3-hydroxyphenyl)-2,4-dioxobutanoate + L-aspartate. The catalysed reaction is 3-hydroxy-L-kynurenine + 3-phenylpyruvate = 4-(2-amino-3-hydroxyphenyl)-2,4-dioxobutanoate + L-phenylalanine. It carries out the reaction L-kynurenine + oxaloacetate = 4-(2-aminophenyl)-2,4-dioxobutanoate + L-aspartate. It catalyses the reaction 3-phenylpyruvate + L-kynurenine = 4-(2-aminophenyl)-2,4-dioxobutanoate + L-phenylalanine. Its pathway is amino-acid degradation; L-kynurenine degradation; kynurenate from L-kynurenine: step 1/2. Its function is as follows. Catalyzes the pyridoxal 5'-phosphate-dependent transamination of both 3-hydroxykynurenine and L-kynurenine to xanthurenic acid and kynurenic acid, respectively, preferentially using the alpha-ketoacid pyruvate, glyoxylate or oxaloacetate as the amino group acceptor. The affinity and catalytic efficiency for 3-hydroxykynurenine is higher than for L-kynurenine. Involved in the detoxification of cytotoxic metabolite 3-hydroxykynurenine generated by the hydroxylation of L-kynurenine, an intermediate in the tryptophan catabolism pathway. Also catalyzes, although with a lesser efficiency, the transamination of alanine with glyoxylate as an amino group acceptor. May play a role in the detoxification of glyoxylate, a toxic plant metabolite from the diet. The protein is 3-hydroxykynurenine transaminase of Aedes aegypti (Yellowfever mosquito).